Consider the following 282-residue polypeptide: 3-hydroxyanthranilate 3,4-dioxygenase (282 aa).

A domain A (catalytic) region spans residues 1–160 (MAMAINVKKW…SKQYKSGKPD (160 aa)). Arg-43 lines the O2 pocket. Fe cation contacts are provided by His-47, Glu-53, and His-91. Glu-53 contacts substrate. Residues Arg-95 and Glu-105 each contribute to the substrate site. Residues 161–177 (PDQPKAKMPFCLSTEQV) are linker. The domain B stretch occupies residues 178–282 (MEPFSFQHWL…LSTSQVPLPM (105 aa)).

Belongs to the 3-HAO family. Monomer. It depends on Fe(2+) as a cofactor.

Its subcellular location is the cytoplasm. It localises to the cytosol. The catalysed reaction is 3-hydroxyanthranilate + O2 = (2Z,4Z)-2-amino-3-carboxymuconate 6-semialdehyde. Its pathway is cofactor biosynthesis; NAD(+) biosynthesis; quinolinate from L-kynurenine: step 3/3. Functionally, catalyzes the oxidative ring opening of 3-hydroxyanthranilate to 2-amino-3-carboxymuconate semialdehyde, which spontaneously cyclizes to quinolinate. This is 3-hydroxyanthranilate 3,4-dioxygenase (haao) from Xenopus laevis (African clawed frog).